The following is a 282-amino-acid chain: Elongation factor Ts (282 aa).

Residues 79-82 (TDFV) form an involved in Mg(2+) ion dislocation from EF-Tu region.

This sequence belongs to the EF-Ts family.

The protein resides in the cytoplasm. Associates with the EF-Tu.GDP complex and induces the exchange of GDP to GTP. It remains bound to the aminoacyl-tRNA.EF-Tu.GTP complex up to the GTP hydrolysis stage on the ribosome. In Shewanella woodyi (strain ATCC 51908 / MS32), this protein is Elongation factor Ts.